Here is a 104-residue protein sequence, read N- to C-terminus: ATP-dependent Clp protease adapter protein ClpS (104 aa).

It belongs to the ClpS family. In terms of assembly, binds to the N-terminal domain of the chaperone ClpA.

In terms of biological role, involved in the modulation of the specificity of the ClpAP-mediated ATP-dependent protein degradation. This Nitratidesulfovibrio vulgaris (strain ATCC 29579 / DSM 644 / CCUG 34227 / NCIMB 8303 / VKM B-1760 / Hildenborough) (Desulfovibrio vulgaris) protein is ATP-dependent Clp protease adapter protein ClpS.